A 348-amino-acid chain; its full sequence is Protein pof5 (348 aa).

This sequence to yeast YDR306C. As to quaternary structure, interacts with skp1.

The protein localises to the mitochondrion. The chain is Protein pof5 (pof5) from Schizosaccharomyces pombe (strain 972 / ATCC 24843) (Fission yeast).